We begin with the raw amino-acid sequence, 951 residues long: Coiled-coil domain-containing protein 15 (951 aa).

4 coiled-coil regions span residues 64-89, 154-193, 782-813, and 839-874; these read LIEE…QVKY, DGIE…VIKK, MDIE…EQEC, and LAQL…IQEK.

As to quaternary structure, interacts with POC5, POC1B, CETN2 and FAM161A.

The protein localises to the cytoplasm. It is found in the cytoskeleton. Its subcellular location is the microtubule organizing center. The protein resides in the centrosome. It localises to the centriole. The protein localises to the centriolar satellite. Functionally, plays an important role in primary cilium assembly, maintenance, and length regulation. Interacts with centriole inner scaffold proteins to promote proper centriole size and integrity and assembly of functional cilia. Required for the recruitment of both the inner scaffold protein POC1B and the distal SFI1/CETN2 complex to centrioles. In Homo sapiens (Human), this protein is Coiled-coil domain-containing protein 15 (CCDC15).